We begin with the raw amino-acid sequence, 1145 residues long: MAGPSRLPDKKQASISSFFTPRNTSPLVNLSQNASKKPPPAESKSSKSTSSRKRPEPQTDDSEDDVPRDAKRRRSNGPSAATDTEDAVASLKLSSSSRTERYALNSSRPSQDEQEKEEDVAERKKKEELHRKFVKKLGHPDSMFSYRQRDTESAAVEGEGEEGEDDEEEPAPKTTAKKKGAKTGKLTPMELQFLEIKRKHMDTLLIVEVGYKFRFFGEDARIAARELSIVCIPGKFRYDEHPSEAHLDRFASASIPVHRLPVHAKRLVAAGYKVGVVRQIETAALKKAGDNRNAPFVRKLTNVYTKGTYIDETGELDQPGETTGASSGGYLLCLTETPAKGMGTDEKVNVGIIAVQPATGDIIYDEFEDGFMRREIETRLLHISPCEFLIVGDLSKATDKLIQHLSGSSTNVFGDKSRVERVPKSKTMAAESYSNVTDFYAGKAKDSDERSAALLNKVLKLPEAVMICLSAMITHLTEYGLQHIFDLTKYFQSFSTRQHMLINGTTLESLEVYRNATDHSEKGSLLWALDKTHTRFGQRLLRKWIGRPLLDQQRLEERVSAVEELLNNQSTAKVDKLVNMLKSIKADLERSLIRIYYGKCTRPELLSTLQTLQKISFEYARVKSPADTGFSSTLLTSAIMTLPSISPMVTAHLSKINAEAARKDDKYAFFLEQHETEDISEHKLGIAAVEQDLDEHRSEAAKDLGKKVPVNYVTVAGIEYLIEVPNTDLKRVPASWAKISGTKKVSRFHTPTVLRLIAERDQHKESLASACDQAFSDLLSQIAGEYQPLRDAVSSLSTLDCLLSLSTVAALPGYTKPTFLPSSHPSFLSITEGRHPIAEHLLPNGYIPFTMSLGTLSSSASSPDPNPTSPSGKPALAQLITGPNMGGKSSYTRAVALLVLLAQIGSFVPATSMSLTLSDAIFTRMGARDNLFKGESTFMVEVSETAAILRQATPRSLVVLDELGRGTSTHDGRAIAGAVLEYVVRDVGCLMLFVTHYQDLAGVAEGLTVGEGEEKRRGVECVHMRFASNKSRTSMDDDAMEVDGDGDGQEGAGADKDEEEEITFLYDLAPGVAHRSYGLNVARLARIPRKVLEVAARKSSELEKEVRAKRIKGAMGLVGGVLYGGGAPGDQEEKLEQLVGLVEQL.

Disordered regions lie at residues 1–183 (MAGP…GAKT) and 857–879 (SSSA…LAQL). Polar residues predominate over residues 13-33 (ASISSFFTPRNTSPLVNLSQN). Basic and acidic residues predominate over residues 121-131 (AERKKKEELHR). Residues 158–169 (GEGEEGEDDEEE) show a composition bias toward acidic residues. Positions 183–307 (TGKLTPMELQ…RKLTNVYTKG (125 aa)) are mispair-binding domain. 882-889 (GPNMGGKS) provides a ligand contact to ATP. A disordered region spans residues 1030 to 1056 (KSRTSMDDDAMEVDGDGDGQEGAGADK). The segment covering 1036 to 1048 (DDDAMEVDGDGDG) has biased composition (acidic residues).

This sequence belongs to the DNA mismatch repair MutS family. MSH3 subfamily. Heterodimer consisting of msh-2-msh-3 (MutS beta). Forms a ternary complex with MutL alpha (mlh-1-pms-1).

It localises to the nucleus. In terms of biological role, component of the post-replicative DNA mismatch repair system (MMR). Heterodimerizes with msh-2 to form MutS beta, which binds to DNA mismatches thereby initiating DNA repair. Msh-3 provides substrate-binding and substrate specificity to the complex. When bound, the MutS beta heterodimer bends the DNA helix and shields approximately 20 base pairs. Acts mainly to repair insertion-deletion loops (IDLs) from 2 to 13 nucleotides in size, but can also repair base-base and single insertion-deletion mismatches that occur during replication. After mismatch binding, forms a ternary complex with the MutL alpha heterodimer, which is thought to be responsible for directing the downstream MMR events, including strand discrimination, excision, and resynthesis. ATP binding and hydrolysis play a pivotal role in mismatch repair functions. The protein is DNA mismatch repair protein msh-3 (msh-3) of Neurospora crassa (strain ATCC 24698 / 74-OR23-1A / CBS 708.71 / DSM 1257 / FGSC 987).